A 258-amino-acid polypeptide reads, in one-letter code: Ribosomal RNA small subunit methyltransferase A (258 aa).

6 residues coordinate S-adenosyl-L-methionine: His-13, Leu-15, Gly-40, Glu-61, Asp-85, and Asn-106.

Belongs to the class I-like SAM-binding methyltransferase superfamily. rRNA adenine N(6)-methyltransferase family. RsmA subfamily.

It localises to the cytoplasm. The catalysed reaction is adenosine(1518)/adenosine(1519) in 16S rRNA + 4 S-adenosyl-L-methionine = N(6)-dimethyladenosine(1518)/N(6)-dimethyladenosine(1519) in 16S rRNA + 4 S-adenosyl-L-homocysteine + 4 H(+). In terms of biological role, specifically dimethylates two adjacent adenosines (A1518 and A1519) in the loop of a conserved hairpin near the 3'-end of 16S rRNA in the 30S particle. May play a critical role in biogenesis of 30S subunits. In Porphyromonas gingivalis (strain ATCC 33277 / DSM 20709 / CIP 103683 / JCM 12257 / NCTC 11834 / 2561), this protein is Ribosomal RNA small subunit methyltransferase A.